Consider the following 360-residue polypeptide: Peptide chain release factor 1 (360 aa).

The residue at position 235 (Gln-235) is an N5-methylglutamine. The tract at residues 284–312 (ERQAQAQADTRRNLLGSGDRSDKIRTYNY) is disordered.

The protein belongs to the prokaryotic/mitochondrial release factor family. In terms of processing, methylated by PrmC. Methylation increases the termination efficiency of RF1.

It is found in the cytoplasm. Functionally, peptide chain release factor 1 directs the termination of translation in response to the peptide chain termination codons UAG and UAA. This Histophilus somni (strain 129Pt) (Haemophilus somnus) protein is Peptide chain release factor 1.